The sequence spans 110 residues: Keratin, type I cytoskeletal 19 (110 aa).

The head stretch occupies residues 1 to 8 (FGSGGVFR). Ser-3 carries the phosphoserine modification. An IF rod domain is found at 7–110 (FRITMQNLND…KLEQEIATYR (104 aa)). Arg-8 bears the Omega-N-methylarginine mark. Positions 9-42 (ITMQNLNDRLASYLDKVRALEQANGELEVKIRDW) are coil 1A. Residues 43–45 (YQK) are linker 1. The tract at residues 46-83 (IVLQIDNARTKFETEQALRVLDELTLARKNHEEEISAL) is coil 1B. Positions 85–110 (ADTERQNQEYQQLMDIKLEQEIATYR) are coil 2. Positions 85-110 (ADTERQNQEYQQLMDIKLEQEIATYR) are necessary for interaction with PNN.

Belongs to the intermediate filament family. In terms of assembly, heterotetramer of two type I and two type II keratins. Interacts with PNN and the actin-binding domain of DMD.

Functionally, involved in the organization of myofibers. Together with KRT8, helps to link the contractile apparatus to dystrophin at the costameres of striated muscle. The sequence is that of Keratin, type I cytoskeletal 19 from Mesocricetus auratus (Golden hamster).